Reading from the N-terminus, the 66-residue chain is uncharacterized protein (66 aa).

This sequence to M.jannaschii MJ0582.

This is an uncharacterized protein from Methanocaldococcus jannaschii (strain ATCC 43067 / DSM 2661 / JAL-1 / JCM 10045 / NBRC 100440) (Methanococcus jannaschii).